Reading from the N-terminus, the 341-residue chain is Golgi-associated RAB2 interactor protein 1B (341 aa).

This sequence belongs to the GARIN family. In terms of tissue distribution, expressed in testis (at protein level).

It localises to the golgi apparatus. In terms of biological role, RAB2B effector protein required for accurate acrosome formation and normal male fertility. In complex with RAB2A/RAB2B, seems to suppress excessive vesicle trafficking during acrosome formation. The polypeptide is Golgi-associated RAB2 interactor protein 1B (Mus musculus (Mouse)).